The sequence spans 606 residues: V-type proton ATPase catalytic subunit A (606 aa).

239 to 246 (GAFGCGKT) provides a ligand contact to ATP.

It belongs to the ATPase alpha/beta chains family. As to quaternary structure, V-ATPase is a heteromultimeric enzyme made up of two complexes: the ATP-hydrolytic V1 complex and the proton translocation V0 complex. The V1 complex consists of three catalytic AB heterodimers that form a heterohexamer, three peripheral stalks each consisting of EG heterodimers, one central rotor including subunits D and F, and the regulatory subunits C and H. The proton translocation complex V0 consists of the proton transport subunit a, a ring of proteolipid subunits c9c'', rotary subunit d, subunits e and f, and the accessory subunits vah-19/Ac45 and vah-20/PRR.

It carries out the reaction ATP + H2O + 4 H(+)(in) = ADP + phosphate + 5 H(+)(out). Functionally, catalytic subunit of the V1 complex of vacuolar(H+)-ATPase (V-ATPase), a multisubunit enzyme composed of a peripheral complex (V1) that hydrolyzes ATP and a membrane integral complex (V0) that translocates protons. V-ATPase is responsible for acidifying and maintaining the pH of intracellular compartments and in some cell types, is targeted to the plasma membrane, where it is responsible for acidifying the extracellular environment. Required along with other vacuolar ATPase components for the removal of protein aggregates which form in immature oocytes in the distal gonad. This removal occurs as the oocytes mature and move to the proximal gonad, is triggered by the introduction of sperm through mating and occurs before fertilization. The introduction of sperm triggers V-ATPase accumulation in proximal oocytes and induces lysosomal acidification which leads to engulfing of protein aggregates by lysosomes and subsequent clearance of the aggregates. Lysosomal acidification also leads to changes in mitochondrial morphology and function. Mitochondria in distal immature oocytes are fragmented, produce high levels of reactive oxygen species (ROS) and have high membrane potential, indicative of metabolic inactivity. In contrast, mitochondria in proximal mature oocytes are tubular with lower ROS levels and membrane potential, indicative of an active metabolic state required for aggregate mobilization before clearance. Involved in receptor-mediated endocytosis. The polypeptide is V-type proton ATPase catalytic subunit A (Caenorhabditis briggsae).